An 88-amino-acid chain; its full sequence is UPF0250 protein Sbal_3280 (88 aa).

It belongs to the UPF0250 family.

In Shewanella baltica (strain OS155 / ATCC BAA-1091), this protein is UPF0250 protein Sbal_3280.